The following is a 352-amino-acid chain: Selenide, water dikinase (352 aa).

Cys23 is a catalytic residue. Residues Lys26 and 54–56 (SRD) contribute to the ATP site. Asp57 is a binding site for Mg(2+). ATP-binding positions include Asp74, Asp97, and 145 to 147 (GHS). Asp97 provides a ligand contact to Mg(2+). Asp233 contacts Mg(2+).

This sequence belongs to the selenophosphate synthase 1 family. Class I subfamily. In terms of assembly, homodimer. It depends on Mg(2+) as a cofactor.

It carries out the reaction hydrogenselenide + ATP + H2O = selenophosphate + AMP + phosphate + 2 H(+). In terms of biological role, synthesizes selenophosphate from selenide and ATP. In Shewanella putrefaciens (strain CN-32 / ATCC BAA-453), this protein is Selenide, water dikinase.